The following is a 42-amino-acid chain: Omega-theraphotoxin-Asp3a (42 aa).

3 cysteine pairs are disulfide-bonded: cysteine 1–cysteine 16, cysteine 8–cysteine 21, and cysteine 15–cysteine 30.

It belongs to the neurotoxin 14 (magi-1) family. 08 (Ltx-4) subfamily. Expressed by the venom gland.

The protein localises to the secreted. Inhibits voltage-gated calcium channels (Cav) in rat cerebellar granule cells. In Aphonopelma sp. (American tarantula), this protein is Omega-theraphotoxin-Asp3a.